Here is a 495-residue protein sequence, read N- to C-terminus: Trigger factor (495 aa).

The 86-residue stretch at 169–254 folds into the PPIase FKBP-type domain; sequence GDRVAMDYVG…VKDVAAPGAV (86 aa). A disordered region spans residues 441-495; that stretch reads LAEDEGEAKAETKKAAPKKKAAAKTEAAEAGEGEEAAAPKKKAAPKKKAADESAE.

Belongs to the FKBP-type PPIase family. Tig subfamily.

It localises to the cytoplasm. It catalyses the reaction [protein]-peptidylproline (omega=180) = [protein]-peptidylproline (omega=0). Involved in protein export. Acts as a chaperone by maintaining the newly synthesized protein in an open conformation. Functions as a peptidyl-prolyl cis-trans isomerase. This is Trigger factor from Rhizobium etli (strain CIAT 652).